The chain runs to 337 residues: MVTGVTAANMTNVLGTAVVPAQLKETPLKSDRRSNKPIMEKRRRARINNCLNELKTLILDATKKDPARHSKLEKADILEKTVKHLQELQRQQAAMQQAADPKIVNKFKAGFADCVNEVSRFPGIEPAQRRRLLQHLSNCINGVKTELHQQQRQQQQQSIHAQMLPSPPSSPEQDSQQGAAAPYLFGIQQTASGYFLPNGMQVIPTKLPNGSIALVLPQSLPQQQQQQLLQHQQQQQQLAVAAAAAAAAAAQQQPMLVSMPQRTASTGSASSHSSAGYESAPGSSSSCSYAPPSPANSSYEPMDIKPSVIQRVPMEQQPLSLVIKKQIKEEEQPWRPW.

The interaction with Topors stretch occupies residues 29 to 48; that stretch reads KSDRRSNKPIMEKRRRARIN. The bHLH domain occupies 31-88; sequence DRRSNKPIMEKRRRARINNCLNELKTLILDATKKDPARHSKLEKADILEKTVKHLQEL. Residues 107–136 enclose the Orange domain; that stretch reads FKAGFADCVNEVSRFPGIEPAQRRRLLQHL. Disordered stretches follow at residues 146-178 and 259-311; these read ELHQ…SQQG and MPQR…VIQR. The segment covering 263–301 has biased composition (low complexity); that stretch reads TASTGSASSHSSAGYESAPGSSSSCSYAPPSPANSSYEP. The WRPW motif motif lies at 334 to 337; it reads WRPW.

As to quaternary structure, transcription repression requires formation of a complex with a corepressor protein (Groucho). Interacts with gro (via WPRW motif) and Topors. Ubiquitinated by Topors.

The protein resides in the nucleus. In terms of biological role, pair-rule protein that regulates embryonic segmentation and adult bristle patterning. Transcriptional repressor of genes that require a bHLH protein for their transcription (e.g. ftz). This is Protein hairy from Drosophila melanogaster (Fruit fly).